The sequence spans 765 residues: Probable dipeptidyl peptidase 4 (765 aa).

A signal peptide spans 1-14 (MKWSILLLVGCAAA). Residues Asn35, Asn78, Asn101, Asn110, Asn169, Asn218, Asn465, and Asn490 are each glycosylated (N-linked (GlcNAc...) asparagine). The Charge relay system role is filled by Ser613. Asn665 carries N-linked (GlcNAc...) asparagine glycosylation. Active-site charge relay system residues include Asp690 and His725.

The protein belongs to the peptidase S9B family.

It is found in the secreted. The enzyme catalyses Release of an N-terminal dipeptide, Xaa-Yaa-|-Zaa-, from a polypeptide, preferentially when Yaa is Pro, provided Zaa is neither Pro nor hydroxyproline.. Functionally, extracellular dipeptidyl-peptidase which removes N-terminal dipeptides sequentially from polypeptides having unsubstituted N-termini provided that the penultimate residue is proline. Contributes to pathogenicity. This chain is Probable dipeptidyl peptidase 4 (dpp4), found in Aspergillus fumigatus (strain ATCC MYA-4609 / CBS 101355 / FGSC A1100 / Af293) (Neosartorya fumigata).